The following is a 447-amino-acid chain: C4-dicarboxylate transport protein 3 (447 aa).

8 helical membrane-spanning segments follow: residues Thr-5 to Ala-27, Ile-42 to Met-64, Ala-77 to Val-99, Leu-146 to Leu-165, Val-186 to Thr-208, Leu-223 to Leu-245, Ile-315 to Leu-337, and Phe-352 to Leu-374.

This sequence belongs to the dicarboxylate/amino acid:cation symporter (DAACS) (TC 2.A.23) family.

The protein resides in the cell inner membrane. Responsible for the transport of dicarboxylates such as succinate, fumarate, and malate from the periplasm across the membrane. This Ralstonia nicotianae (strain ATCC BAA-1114 / GMI1000) (Ralstonia solanacearum) protein is C4-dicarboxylate transport protein 3 (dctA3).